A 75-amino-acid chain; its full sequence is Small ribosomal subunit protein bS18 (75 aa).

Belongs to the bacterial ribosomal protein bS18 family. Part of the 30S ribosomal subunit. Forms a tight heterodimer with protein bS6.

In terms of biological role, binds as a heterodimer with protein bS6 to the central domain of the 16S rRNA, where it helps stabilize the platform of the 30S subunit. In Anaplasma marginale (strain St. Maries), this protein is Small ribosomal subunit protein bS18.